Reading from the N-terminus, the 175-residue chain is tRNA-acetylating toxin 3 (175 aa).

Acetyl-CoA is bound by residues Leu95, Val97, Gly103, Gly105, Gly107, Ala108, Asp133, Gln138, Asp141, and Trp142. The active site involves Tyr143. Acetyl-CoA is bound by residues Gly145 and Phe146.

Belongs to the acetyltransferase family. GNAT subfamily. As to quaternary structure, homodimer (in absence of antitoxin); has a condensed and elongated form. Forms a complex with cognate antitoxin TacA3. Forms a 4:2 antitoxin:toxin complex with cognate antitoxin TacA3. Forms a 4:4 antitoxin:toxin complex with promoter DNA, where 2 TacT3 dimers bridge 2 TacA3 dimers. Only TacA3 contacts promoter DNA in the octomeric form. TacT3 may contact DNA in the hexameric form.

The enzyme catalyses glycyl-tRNA(Gly) + acetyl-CoA = N-acetylglycyl-tRNA(Gly) + CoA + H(+). Functionally, toxic component of a type II toxin-antitoxin (TA) system. Acetylates tRNA and inhibits translation. Acetylates only Gly-tRNA on all 3 Gly-tRNA(Gly) isoacceptors in situ. In vitro acetylates mainly Ile/Leu and Gly. Overexpression during the lag phase of a tacA3-tacT3 deletion strain leads to a 150-fold increase in persister cells in the presence of cefotaxime and a non-growth state in the absence of antibiotic. Persister cell formation and the growth defect are neutralized by cognate antitoxin TacA3, but not by TacA1 or TacA2. Plays a role in persister cell formation. In terms of biological role, the TacA3-TacT3 complex both represses and derepresses expression of its own operon. The hexameric 4:2 TacA3-TacT3 complex binds promoter DNA and represses its transcription; both subunits are required. The octomeric 4:4 TacA3-TacT3 complex derepresses the operon. The shift from hexameric to octomeric complex probably alters DNA-binding, leading to dissociation from the operator DNA and derepression. In Salmonella typhimurium (strain 14028s / SGSC 2262), this protein is tRNA-acetylating toxin 3.